The following is a 424-amino-acid chain: Arginine biosynthesis bifunctional protein ArgJ (424 aa).

Thr172, Lys198, Thr209, Glu296, Asn419, and Ser424 together coordinate substrate. Thr209 acts as the Nucleophile in catalysis.

Belongs to the ArgJ family. In terms of assembly, heterotetramer of two alpha and two beta chains.

The protein resides in the cytoplasm. It carries out the reaction N(2)-acetyl-L-ornithine + L-glutamate = N-acetyl-L-glutamate + L-ornithine. The enzyme catalyses L-glutamate + acetyl-CoA = N-acetyl-L-glutamate + CoA + H(+). Its pathway is amino-acid biosynthesis; L-arginine biosynthesis; L-ornithine and N-acetyl-L-glutamate from L-glutamate and N(2)-acetyl-L-ornithine (cyclic): step 1/1. It functions in the pathway amino-acid biosynthesis; L-arginine biosynthesis; N(2)-acetyl-L-ornithine from L-glutamate: step 1/4. Its function is as follows. Catalyzes two activities which are involved in the cyclic version of arginine biosynthesis: the synthesis of N-acetylglutamate from glutamate and acetyl-CoA as the acetyl donor, and of ornithine by transacetylation between N(2)-acetylornithine and glutamate. The polypeptide is Arginine biosynthesis bifunctional protein ArgJ (Gluconobacter oxydans (strain 621H) (Gluconobacter suboxydans)).